The primary structure comprises 569 residues: MASEQSNPRLPRRPPYMAEKARATLKEAFPNTDDAIIRAVLAASGYKLEPAFNALLGLSDPQVAEEMEQAETSYAYDTAAHDDPVQRQLEEDERCARELANRYNSHRPERRRKTNNDRRNYPPQNRTAKPNDNDGDDYSFFEDDLPVIKDTFMRGFQSFKQRSMEWVENIASKFDGEEEDDDDEKYSAPSKIYPSPRRSTAATLESAYEERPPSLPRRKPSRPGTAITLPPYESDPHMLNEKDFERLRLESSSSPMMRRSSLNSNRRSVESSSSAAFVEGQSFILDSNGAIEVANSAFALDDSDLESAYNEELEMKKDTSKPTASTKEVVVEKKPDESRKQAARTLETVSEEQMGSSNAKSKVLTSEPKDSTSVEAEKTETDEPAVGKGASDVSDTAEISEKTEAKNADSEANLEEKSDVGEEKESKDENNKASLHKDVEEKDTKITNEDTGKTETDVKAKETDSIEANDKDEKTDSKETEDKVEETESKEADVKAKETDSIEVDDKEEKTDSKETADKVEQTDSKDTNEKPAKDDNKEANEKAEKVDSKDVKEKIEEAADLQNSGKET.

In terms of domain architecture, CUE spans 17–60 (MAEKARATLKEAFPNTDDAIIRAVLAASGYKLEPAFNALLGLSD). Disordered stretches follow at residues 67-139 (MEQA…DDYS), 175-275 (DGEE…SSSA), and 311-569 (EELE…GKET). Positions 79–100 (AAHDDPVQRQLEEDERCARELA) are enriched in basic and acidic residues. Over residues 104-113 (NSHRPERRRK) the composition is skewed to basic residues. Basic and acidic residues predominate over residues 234-249 (SDPHMLNEKDFERLRL). Positions 250 to 274 (ESSSSPMMRRSSLNSNRRSVESSSS) are enriched in low complexity. Over residues 329 to 340 (VVVEKKPDESRK) the composition is skewed to basic and acidic residues. The span at 347–364 (ETVSEEQMGSSNAKSKVL) shows a compositional bias: polar residues. Basic and acidic residues-rich tracts occupy residues 367 to 381 (EPKDSTSVEAEKTET), 399 to 500 (ISEK…KETD), and 507 to 558 (KEEK…KIEE).

It localises to the cytoplasm. This Schizosaccharomyces pombe (strain 972 / ATCC 24843) (Fission yeast) protein is CUE domain-containing protein 5.